The following is a 90-amino-acid chain: c-Myc-binding protein homolog (90 aa).

Belongs to the AMY1 family.

The protein resides in the nucleus. The chain is c-Myc-binding protein homolog (mycbp) from Dictyostelium discoideum (Social amoeba).